A 141-amino-acid polypeptide reads, in one-letter code: Putative pre-16S rRNA nuclease (141 aa).

This sequence belongs to the YqgF nuclease family.

The protein resides in the cytoplasm. Functionally, could be a nuclease involved in processing of the 5'-end of pre-16S rRNA. This is Putative pre-16S rRNA nuclease from Chlorobium luteolum (strain DSM 273 / BCRC 81028 / 2530) (Pelodictyon luteolum).